We begin with the raw amino-acid sequence, 316 residues long: Biotin synthase (316 aa).

The 227-residue stretch at 42-268 folds into the Radical SAM core domain; that stretch reads LCGESVDLCT…INPTAYIRMA (227 aa). Positions 60, 64, and 67 each coordinate [4Fe-4S] cluster. [2Fe-2S] cluster contacts are provided by serine 104, cysteine 136, cysteine 196, and arginine 266.

It belongs to the radical SAM superfamily. Biotin synthase family. Homodimer. [4Fe-4S] cluster is required as a cofactor. Requires [2Fe-2S] cluster as cofactor.

The catalysed reaction is (4R,5S)-dethiobiotin + (sulfur carrier)-SH + 2 reduced [2Fe-2S]-[ferredoxin] + 2 S-adenosyl-L-methionine = (sulfur carrier)-H + biotin + 2 5'-deoxyadenosine + 2 L-methionine + 2 oxidized [2Fe-2S]-[ferredoxin]. It participates in cofactor biosynthesis; biotin biosynthesis; biotin from 7,8-diaminononanoate: step 2/2. In terms of biological role, catalyzes the conversion of dethiobiotin (DTB) to biotin by the insertion of a sulfur atom into dethiobiotin via a radical-based mechanism. In Clostridium beijerinckii (strain ATCC 51743 / NCIMB 8052) (Clostridium acetobutylicum), this protein is Biotin synthase.